The primary structure comprises 84 residues: Large ribosomal subunit protein bL27 (84 aa).

Residues 1-22 form a disordered region; it reads MAHKKGGGSTKNGRDSNPKYLG.

It belongs to the bacterial ribosomal protein bL27 family.

The polypeptide is Large ribosomal subunit protein bL27 (Prosthecochloris aestuarii (strain DSM 271 / SK 413)).